A 272-amino-acid polypeptide reads, in one-letter code: Pantothenate synthetase (272 aa).

27-34 (MGALHNGH) provides a ligand contact to ATP. Histidine 34 functions as the Proton donor in the catalytic mechanism. Glutamine 58 serves as a coordination point for (R)-pantoate. Residue glutamine 58 participates in beta-alanine binding. Residue 143–146 (GKKD) coordinates ATP. Glutamine 149 lines the (R)-pantoate pocket. Residues valine 172 and 180–183 (LSSR) each bind ATP.

Belongs to the pantothenate synthetase family. Homodimer.

Its subcellular location is the cytoplasm. The enzyme catalyses (R)-pantoate + beta-alanine + ATP = (R)-pantothenate + AMP + diphosphate + H(+). The protein operates within cofactor biosynthesis; (R)-pantothenate biosynthesis; (R)-pantothenate from (R)-pantoate and beta-alanine: step 1/1. Its function is as follows. Catalyzes the condensation of pantoate with beta-alanine in an ATP-dependent reaction via a pantoyl-adenylate intermediate. The protein is Pantothenate synthetase of Aliarcobacter butzleri (strain RM4018) (Arcobacter butzleri).